The chain runs to 618 residues: 25S rRNA (cytosine(2870)-C(5))-methyltransferase (618 aa).

The segment at 1–132 is disordered; the sequence is MGSRRHKNKQ…NDAHPIFSDD (132 aa). Positions 48–59 are enriched in basic residues; the sequence is RKKKKSKPFKKS. Over residues 64–79 the composition is skewed to acidic residues; it reads EEVVEEDKDLPEVDLE. Residues 80–89 show a composition bias toward basic and acidic residues; that stretch reads ELSKARKSLF. Residues 90–123 show a composition bias toward acidic residues; sequence DDEEDDDEAGLVDEELKDEFDLEQEYDYDEDEDN. S-adenosyl-L-methionine-binding positions include 353–359, Asp-377, Asp-404, and Asp-421; that span reads AAAPGGK. Cys-478 acts as the Nucleophile in catalysis. Ser-580 bears the Phosphoserine mark.

Belongs to the class I-like SAM-binding methyltransferase superfamily. RsmB/NOP family. As to quaternary structure, interacts with NOP53. Interacts with TRM112.

Its subcellular location is the nucleus. It is found in the nucleolus. The enzyme catalyses cytidine(2870) in 25S rRNA + S-adenosyl-L-methionine = 5-methylcytidine(2870) in 25S rRNA + S-adenosyl-L-homocysteine + H(+). Its function is as follows. S-adenosyl-L-methionine-dependent methyltransferase that specifically methylates the C(5) position of cytosine 2870 (m5C2870) in 25S rRNA. Required for 60S ribosomal subunit synthesis and processing. This is 25S rRNA (cytosine(2870)-C(5))-methyltransferase (NOP2) from Saccharomyces cerevisiae (strain ATCC 204508 / S288c) (Baker's yeast).